A 95-amino-acid polypeptide reads, in one-letter code: CRISPR-associated endoribonuclease Cas2 1 (95 aa).

D11 contacts Mg(2+).

This sequence belongs to the CRISPR-associated endoribonuclease Cas2 protein family. Homodimer, forms a heterotetramer with a Cas1 homodimer. Mg(2+) is required as a cofactor.

In terms of biological role, CRISPR (clustered regularly interspaced short palindromic repeat), is an adaptive immune system that provides protection against mobile genetic elements (viruses, transposable elements and conjugative plasmids). CRISPR clusters contain sequences complementary to antecedent mobile elements and target invading nucleic acids. CRISPR clusters are transcribed and processed into CRISPR RNA (crRNA). Functions as a ssRNA-specific endoribonuclease. Involved in the integration of spacer DNA into the CRISPR cassette. The protein is CRISPR-associated endoribonuclease Cas2 1 of Methanospirillum hungatei JF-1 (strain ATCC 27890 / DSM 864 / NBRC 100397 / JF-1).